Reading from the N-terminus, the 1306-residue chain is MGAASGRRSPPLLLPLLLLLLPPPPVILELDPALQPGNFPADEAGAQIFAASFNSSAEQVLFQSTAASWAHDTNITEENARLQEEAALLSQEFSEAWGQKAKDLFDPVWQNFTDPTLLRIIGAVRTLGPANLDLEKRQKYNSLLSNMSRIYSTAKVCFPNKTAPCWSLDPELTNILASSRSYTLLLYAWEGWHNAAGIPLKPLYQDFTALSNEAYKQDGFSDTGAYWRSWYDSPTFTEDLERLYQQLEPLYLNLHAYVRRALHRRYGDRYINLRGPIPAHLLGNMWAQSWENIYDTVVPFPDKPNLDVTDVMVQKGWNATHMFRVAEEFFTSLGLLPMPPEFWAESMLEKPSDGREVVCHASAWDFYNRKDFRIKQCTRVTMDQLSTVHHEMGHVQYYLQYKGQHVSLRRGANPGFHEAIGDVLALSVSTPAHLHKIGLLDQVTNDTESDINYLLKMALEKIAFLPFGYLVDQWRWGVFSGRTPPSRYNYDWWYLRTKYQGICPPVVRNETHFDAGAKFHVPNVTPYIRYFVSFVLQFQFHEALCKEAGHQGPLHQCDIYQSTQAGAKLRALLQAGSSRPWQEVLKDMVGSDNLDARPLLSYFQPVTQWLEEQNQQNGEVLGWPEYQWRPPMPDNYPEGIDLVSDEDEARKFVEEYDRRSQVVWNEYAEANWNYSTDISTDNSKLLMEKNLQMANHTVKYGTWARKFDVTNFQNATMKRMIKKIQDLERAALPTKELEEYNQILLDMETVYSVASVCHENGTCLRLEPDLTNLMATSRNYQDLAWAWKSWRDKVGRSILPYFPKYVELTNKAARLNGYQDGGDSWRSMYEMPFLEEELEQLFQELQPLYLNLHAYVRRALHRHYGPDVINLEGPIPAHLLGNMWAQSWSNIYDLVAPFPSAPKMDATEAMIKQGWTPLRMFKEADNFFTSLGLLPMPPEFWNKSMLEKPTDGREVVCHASAWDFFNGKDFRIKQCTSVNMEDLVVAHHEMGHIQYFMQYKDLPVTFREGANPGFHEAIGDVLALSVSTPTHLHKINLLSSGDGGYEEDINFLMKMALEKIAFIPFSFLVDQWRWRVFDGSVTRENYNQEWWSLRLKYQGVCPPLARSQDDFDPGAKFHIPASVPYVRYFVSFVIQFQFHQALCQAAGHQGPLHKCDIYQSKEAGKLLADAMKLGFSQPWPEAMRLITGQSNMSAAAMMTYFKPLLDWLVTENGRHGEKLGWPQYNWTPNSARLEGPFVGSGRVNFLGLNLEEQQARVGQWVLLFLGVALLVATLGLTQRLFSIRHHSLRRPHRGPQFGSEVELRHS.

A signal peptide spans 1–28 (MGAASGRRSPPLLLPLLLLLLPPPPVIL). Residues 29 to 1256 (ELDPALQPGN…GLNLEEQQAR (1228 aa)) are Extracellular-facing. 2 Peptidase M2 domains span residues 40–624 (PADE…LGWP) and 643–1222 (VSDE…LGWP). Residues Asn54, Asn74, Asn111, Asn146, and Asn160 are each glycosylated (N-linked (GlcNAc...) asparagine). A disulfide bond links Cys157 and Cys165. Residue Tyr231 participates in chloride binding. N-linked (GlcNAc...) asparagine glycosylation is present at Asn318. An intrachain disulfide couples Cys359 to Cys377. His390 provides a ligand contact to Zn(2+). The active-site Proton acceptor 1 is Glu391. Residues His394 and Glu418 each contribute to the Zn(2+) site. 2 N-linked (GlcNAc...) asparagine glycosylation sites follow: Asn445 and Asn509. His520 serves as the catalytic Proton donor 1. An N-linked (GlcNAc...) asparagine glycan is attached at Asn523. Residue Arg529 coordinates chloride. A disulfide bridge connects residues Cys545 and Cys557. Residues Asn673, Asn695, Asn714, and Asn760 are each glycosylated (N-linked (GlcNAc...) asparagine). The cysteines at positions 757 and 763 are disulfide-linked. 2 residues coordinate chloride: Arg791 and Tyr829. Asn942 is a glycosylation site (N-linked (GlcNAc...) asparagine). Residues Cys957 and Cys975 are joined by a disulfide bond. His988 contacts Zn(2+). Residue Glu989 is the Proton acceptor 2 of the active site. Residues His992 and Glu1016 each contribute to the Zn(2+) site. Residues Trp1090 and Arg1094 each coordinate chloride. Catalysis depends on His1118, which acts as the Proton donor 2. Arg1127 contributes to the chloride binding site. A disulfide bridge links Cys1143 with Cys1155. 2 N-linked (GlcNAc...) asparagine glycosylation sites follow: Asn1191 and Asn1225. Residues 1215-1256 (HGEKLGWPQYNWTPNSARLEGPFVGSGRVNFLGLNLEEQQAR) are juxtamembrane stalk. The helical transmembrane segment at 1257-1277 (VGQWVLLFLGVALLVATLGLT) threads the bilayer. The Cytoplasmic segment spans residues 1278–1306 (QRLFSIRHHSLRRPHRGPQFGSEVELRHS). The residue at position 1299 (Ser1299) is a Phosphoserine.

This sequence belongs to the peptidase M2 family. Monomer and homodimer; homodimerizes following binding to an inhibitor. Interacts with calmodulin (CALM1, CALM2 or CALM3); interaction takes place in the cytoplasmic region and regulates phosphorylation and proteolytic cleavage. It depends on Zn(2+) as a cofactor. Chloride is required as a cofactor. In terms of processing, produced following proteolytic cleavage by secretase enzymes that cleave the transmembrane form in the juxtamembrane stalk region upstream of the transmembrane region. Cleavage can take place at different sites of the juxtamembrane stalk region. Phosphorylated by CK2 on Ser-1299; which allows membrane retention. Phosphorylated on tyrosine residues on its extracellular part, promoting cleavage by secretase enzymes and formation of the soluble form (Angiotensin-converting enzyme, soluble form).

The protein localises to the cell membrane. The protein resides in the cytoplasm. It localises to the secreted. The enzyme catalyses Release of a C-terminal dipeptide, oligopeptide-|-Xaa-Yaa, when Xaa is not Pro, and Yaa is neither Asp nor Glu. Thus, conversion of angiotensin I to angiotensin II, with increase in vasoconstrictor activity, but no action on angiotensin II.. It carries out the reaction angiotensin I + H2O = L-histidyl-L-leucine + angiotensin II. The catalysed reaction is bradykinin + H2O = L-Phe-L-Arg + bradykinin(1-7). It catalyses the reaction substance P + H2O = substance P(1-9) + L-Leu-L-Met-NH2. The enzyme catalyses substance P + H2O = substance P(1-8) + Gly-L-Leu-L-Met-NH2. It carries out the reaction substance P + H2O = L-Phe-L-Phe-Gly-L-Leu-L-Met-NH2 + substance P(1-6). The catalysed reaction is neurotensin + H2O = neurotensin(1-11) + L-isoleucyl-L-leucine. It catalyses the reaction goralatide + H2O = N-acetyl-L-seryl-L-aspartate + L-lysyl-L-proline. The enzyme catalyses Met-enkephalin + H2O = L-phenylalanyl-L-methionine + L-tyrosylglycylglycine. It carries out the reaction Leu-enkephalin + H2O = L-tyrosylglycylglycine + L-phenylalanyl-L-leucine. The catalysed reaction is Met-enkephalin-Arg-Phe + H2O = L-arginyl-L-phenylalanine + Met-enkephalin. With respect to regulation, the dipeptidyl carboxypeptidase activity is strongly activated by chloride. The dipeptidyl carboxypeptidase activity is specifically inhibited by lisinopril, captopril and enalaprilat. Dipeptidyl carboxypeptidase that removes dipeptides from the C-terminus of a variety of circulating hormones, such as angiotensin I, bradykinin or enkephalins, thereby playing a key role in the regulation of blood pressure, electrolyte homeostasis or synaptic plasticity. Composed of two similar catalytic domains, each possessing a functional active site, with different selectivity for substrates. Plays a major role in the angiotensin-renin system that regulates blood pressure and sodium retention by the kidney by converting angiotensin I to angiotensin II, resulting in an increase of the vasoconstrictor activity of angiotensin. Also able to inactivate bradykinin, a potent vasodilator, and therefore enhance the blood pressure response. Acts as a regulator of synaptic transmission by mediating cleavage of neuropeptide hormones, such as substance P, neurotensin or enkephalins. Catalyzes degradation of different enkephalin neuropeptides (Met-enkephalin, Leu-enkephalin, Met-enkephalin-Arg-Phe and possibly Met-enkephalin-Arg-Gly-Leu). Acts as a regulator of synaptic plasticity in the nucleus accumbens of the brain by mediating cleavage of Met-enkephalin-Arg-Phe, a strong ligand of Mu-type opioid receptor OPRM1, into Met-enkephalin. Met-enkephalin-Arg-Phe cleavage by ACE decreases activation of OPRM1, leading to long-term synaptic potentiation of glutamate release. Also acts as a regulator of hematopoietic stem cell differentiation by mediating degradation of hemoregulatory peptide N-acetyl-SDKP (AcSDKP). Acts as a regulator of cannabinoid signaling pathway by mediating degradation of hemopressin, an antagonist peptide of the cannabinoid receptor CNR1. Involved in amyloid-beta metabolism by catalyzing degradation of Amyloid-beta protein 40 and Amyloid-beta protein 42 peptides, thereby preventing plaque formation. Catalyzes cleavage of cholecystokinin (maturation of Cholecystokinin-8 and Cholecystokinin-5) and Gonadoliberin-1 (both maturation and degradation) hormones. Degradation of hemoregulatory peptide N-acetyl-SDKP (AcSDKP) and amyloid-beta proteins is mediated by the N-terminal catalytic domain, while angiotensin I and cholecystokinin cleavage is mediated by the C-terminal catalytic region. In terms of biological role, soluble form that is released in blood plasma and other body fluids following proteolytic cleavage in the juxtamembrane stalk region. This chain is Angiotensin-converting enzyme, found in Bos taurus (Bovine).